The primary structure comprises 336 residues: Ketol-acid reductoisomerase (NADP(+)) 1 (336 aa).

Residues 2–181 form the KARI N-terminal Rossmann domain; that stretch reads AKVYYEKDVT…GATRAGVLET (180 aa). NADP(+) is bound by residues 25–28, arginine 48, serine 52, and 82–85; these read YGSQ and DELQ. The active site involves histidine 107. Glycine 133 provides a ligand contact to NADP(+). Positions 182–327 constitute a KARI C-terminal knotted domain; the sequence is TFKEETETDL…RKLREMMPFV (146 aa). The Mg(2+) site is built by aspartate 190, glutamate 194, glutamate 226, and glutamate 230. Serine 251 lines the substrate pocket.

This sequence belongs to the ketol-acid reductoisomerase family. Mg(2+) is required as a cofactor.

The enzyme catalyses (2R)-2,3-dihydroxy-3-methylbutanoate + NADP(+) = (2S)-2-acetolactate + NADPH + H(+). The catalysed reaction is (2R,3R)-2,3-dihydroxy-3-methylpentanoate + NADP(+) = (S)-2-ethyl-2-hydroxy-3-oxobutanoate + NADPH + H(+). It participates in amino-acid biosynthesis; L-isoleucine biosynthesis; L-isoleucine from 2-oxobutanoate: step 2/4. The protein operates within amino-acid biosynthesis; L-valine biosynthesis; L-valine from pyruvate: step 2/4. Involved in the biosynthesis of branched-chain amino acids (BCAA). Catalyzes an alkyl-migration followed by a ketol-acid reduction of (S)-2-acetolactate (S2AL) to yield (R)-2,3-dihydroxy-isovalerate. In the isomerase reaction, S2AL is rearranged via a Mg-dependent methyl migration to produce 3-hydroxy-3-methyl-2-ketobutyrate (HMKB). In the reductase reaction, this 2-ketoacid undergoes a metal-dependent reduction by NADPH to yield (R)-2,3-dihydroxy-isovalerate. This is Ketol-acid reductoisomerase (NADP(+)) 1 from Bacillus cereus (strain ATCC 10987 / NRS 248).